The following is a 138-amino-acid chain: Large ribosomal subunit protein uL16 (138 aa).

A compositionally biased stretch (basic residues) spans 1 to 17 (MLIPRKVKHRKQHHPRQ). The segment at 1–23 (MLIPRKVKHRKQHHPRQRGIASG) is disordered.

The protein belongs to the universal ribosomal protein uL16 family. Part of the 50S ribosomal subunit.

Its function is as follows. Binds 23S rRNA and is also seen to make contacts with the A and possibly P site tRNAs. This Mycobacterium sp. (strain JLS) protein is Large ribosomal subunit protein uL16.